Consider the following 61-residue polypeptide: Antimicrobial peptide 1 (61 aa).

The signal sequence occupies residues 1–24 (LPVAFLKFAIVLILFIAMSAMIEA). The residue at position 25 (Q25) is a Pyrrolidone carboxylic acid. Intrachain disulfides connect C26–C43, C33–C47, and C42–C58.

This sequence belongs to the AMP family. As to quaternary structure, homodimer. Three disulfide bonds are present. Found only in seeds.

It localises to the secreted. Possesses antifungal activity and is also active on two tested Gram-positive bacteria but is non-toxic for Gram-negative bacteria and cultured human cells. This Mirabilis jalapa (Garden four-o'clock) protein is Antimicrobial peptide 1 (AMP1).